A 431-amino-acid chain; its full sequence is MKHLTEMVEQHKRGNTNGIYAVCSAHPLVLEAAIRYAHANHTPLLIEATSNQVDQFGGYTGMTPADFRGFVYQLADSLNFPQSQLILGGDHLGPNRWQNLPAAQAMANADDLIKSYVAAGFKKIHLDCSMSCANDPIPLTDEIVAERAARLAKIAEETCREHFGESDLVYVIGTEVPVPGGAHETLTELEVTTPDAARATLEAHRHAFEKQGLSAIWPRIIGLVVQPGVEFDHTHIIDYQPQKAIALSAMVEAYDTLVFEAHSTDYQTPQSLRQLVKDHFAILKVGPALTFALREALFSLAAIEEELLPAKTSSGLRHVLESVMLDRPEYWQSHYHGDGNARRLARGYSYSDRVRYYWPDQQIDEAFARLVRNLADDPIPLPLISQYLPLQYARVREGDLNATPRELIISHIQDVLQQYHAACQGVTSQNA.

The protein belongs to the GatZ/KbaZ family. KbaZ subfamily. As to quaternary structure, forms a complex with KbaY.

It participates in carbohydrate metabolism; D-tagatose 6-phosphate degradation; D-glyceraldehyde 3-phosphate and glycerone phosphate from D-tagatose 6-phosphate: step 2/2. Functionally, component of the tagatose-1,6-bisphosphate aldolase KbaYZ that is required for full activity and stability of the Y subunit. Could have a chaperone-like function for the proper and stable folding of KbaY. When expressed alone, KbaZ does not show any aldolase activity. This is D-tagatose-1,6-bisphosphate aldolase subunit KbaZ from Citrobacter koseri (strain ATCC BAA-895 / CDC 4225-83 / SGSC4696).